A 273-amino-acid polypeptide reads, in one-letter code: Proteasome subunit beta (273 aa).

Polar residues predominate over residues 1-19; it reads MQESTANKVAANATSSFTE. A disordered region spans residues 1 to 23; it reads MQESTANKVAANATSSFTEHLQR. A propeptide spans 1 to 50 (removed in mature form; by autocatalysis); it reads MQESTANKVAANATSSFTEHLQRDRPELLPFNRSGQGSATAAAPLQVPHA. Residue Thr51 is the Nucleophile of the active site.

The protein belongs to the peptidase T1B family. As to quaternary structure, the 20S proteasome core is composed of 14 alpha and 14 beta subunits that assemble into four stacked heptameric rings, resulting in a barrel-shaped structure. The two inner rings, each composed of seven catalytic beta subunits, are sandwiched by two outer rings, each composed of seven alpha subunits. The catalytic chamber with the active sites is on the inside of the barrel. Has a gated structure, the ends of the cylinder being occluded by the N-termini of the alpha-subunits. Is capped by the proteasome-associated ATPase, ARC.

It is found in the cytoplasm. The enzyme catalyses Cleavage of peptide bonds with very broad specificity.. The protein operates within protein degradation; proteasomal Pup-dependent pathway. The formation of the proteasomal ATPase ARC-20S proteasome complex, likely via the docking of the C-termini of ARC into the intersubunit pockets in the alpha-rings, may trigger opening of the gate for substrate entry. Interconversion between the open-gate and close-gate conformations leads to a dynamic regulation of the 20S proteasome proteolysis activity. Component of the proteasome core, a large protease complex with broad specificity involved in protein degradation. The chain is Proteasome subunit beta from Pseudarthrobacter chlorophenolicus (strain ATCC 700700 / DSM 12829 / CIP 107037 / JCM 12360 / KCTC 9906 / NCIMB 13794 / A6) (Arthrobacter chlorophenolicus).